The chain runs to 416 residues: Adenylosuccinate synthetase (416 aa).

GTP is bound by residues Gly-11–Lys-17 and Gly-39–Thr-41. The active-site Proton acceptor is the Asp-12. Positions 12 and 39 each coordinate Mg(2+). IMP is bound by residues Asp-12–Lys-15, Asn-37–His-40, Thr-125, Arg-139, Gln-214, Thr-229, and Arg-290. The active-site Proton donor is the His-40. Thr-286–Arg-292 is a binding site for substrate. GTP-binding positions include Arg-292, Lys-318–Asp-320, and Ser-405–Gly-407.

This sequence belongs to the adenylosuccinate synthetase family. In terms of assembly, homodimer. The cofactor is Mg(2+).

Its subcellular location is the cytoplasm. It carries out the reaction IMP + L-aspartate + GTP = N(6)-(1,2-dicarboxyethyl)-AMP + GDP + phosphate + 2 H(+). The protein operates within purine metabolism; AMP biosynthesis via de novo pathway; AMP from IMP: step 1/2. Functionally, plays an important role in the de novo pathway of purine nucleotide biosynthesis. Catalyzes the first committed step in the biosynthesis of AMP from IMP. The sequence is that of Adenylosuccinate synthetase from Picrophilus torridus (strain ATCC 700027 / DSM 9790 / JCM 10055 / NBRC 100828 / KAW 2/3).